The following is a 70-amino-acid chain: DNA gyrase inhibitor YacG (70 aa).

Zn(2+)-binding residues include Cys-9, Cys-12, Cys-28, and Cys-32. Residues Glu-43–Gln-70 form a disordered region.

This sequence belongs to the DNA gyrase inhibitor YacG family. In terms of assembly, interacts with GyrB. Zn(2+) serves as cofactor.

In terms of biological role, inhibits all the catalytic activities of DNA gyrase by preventing its interaction with DNA. Acts by binding directly to the C-terminal domain of GyrB, which probably disrupts DNA binding by the gyrase. The sequence is that of DNA gyrase inhibitor YacG from Legionella pneumophila (strain Lens).